A 321-amino-acid chain; its full sequence is PI-PLC X domain-containing protein 3 (321 aa).

The PI-PLC X-box domain occupies 22 to 197 (SIHSIPLTNL…DYQVLVFYHS (176 aa)). Active-site residues include His37 and His114.

This Bos taurus (Bovine) protein is PI-PLC X domain-containing protein 3 (PLCXD3).